Reading from the N-terminus, the 341-residue chain is uncharacterized protein (341 aa).

The chain crosses the membrane as a helical span at residues 315-337 (VAAWFSGIAGGTFLALKLVSLMM).

The protein localises to the cell membrane. This is an uncharacterized protein from Bacillus subtilis (strain 168).